We begin with the raw amino-acid sequence, 679 residues long: MSAPKNEMYYSLLEWFKTLNLNAPHADAESLADGVALAQALNQFAPESFTDAWLSKIKASAVGSNWRLRMSNLKKVTQSVYDYYSDVLNYSLSDFSKPDLQSIAEKCDLGELERLLQLVLGCAVNCAEKQSYITEIMCLEEELQANIMRALQELEATRQASSAEGGVVSSLSRSPRTGILDSKAVQEDRDALAQKCFETEKKMLLLIDEKTNLQQELHKLQQEFARLEQHSTVIGDDGVSLGPVQSGSVRYNELRRQLDLLKEELLQSEGAREDLKLKAQQQDTDLLHMQMRIEELMKSSAEVTTLKDEVDVLRESNDKLKICEAQLDTYKKKLEDYNDLKKQVKILEERSADYVQQNAQFEEDAKRYANTKGQVELFKKEIQDLHAKLDAESSKNVKLEFDNKNLDGKNLALQRAKDSLLKERDNLREAVDELKCGQLSSNTALTGTTVSRELQPSATVEKLQRLEAENKALREGQGGQTALAQLLDDANKRCENLREQLKTANERILSLSHASQSDDPILKESEFGKQIKQLMELNEQKTLQLEEAVTQSTSLQCKVTQLETNLSAREQEILVYDAKYRKCVEKAKEVIKSIDPRIASALDASVLEKSADLVEDEPKPKMSVMEEQLMTSAFYRLGVNAQRDAIDSKLAILMGSGQTFLARQRQSAPRKSLSAMKSK.

The Calponin-homology (CH) domain occupies 6–123 (NEMYYSLLEW…RLLQLVLGCA (118 aa)). Coiled coils occupy residues 135–437 (EIMC…LKCG) and 480–574 (QTAL…QEIL).

Belongs to the hook family. In terms of assembly, homodimer. Interacts with microtubules via its N-terminus.

The protein localises to the cytoplasm. It localises to the cytoskeleton. It is found in the endosome. Its subcellular location is the synapse. In terms of biological role, involved in endocytic trafficking by stabilizing organelles of the endocytic pathway. Probably acts as a cytoskeletal linker protein required to tether endosome vesicles to the cytoskeleton. Involved in modulation of endocytosis at stages required for down-regulation of membrane proteins that control synapse size. Not involved in synaptic vesicle recycling. Required in R7 cells for boss endocytosis into multivesicular bodies (MVBs). Has a role in regulating adult longevity. This chain is Protein hook, found in Drosophila yakuba (Fruit fly).